We begin with the raw amino-acid sequence, 410 residues long: Translation initiation factor 2 subunit gamma (410 aa).

Positions 6–203 (QSEVNIGMVG…AIQEFIPTPE (198 aa)) constitute a tr-type G domain. Residues 15–22 (GHVDHGKT) form a G1 region. D18, T22, G43, and S45 together coordinate Mg(2+). 18 to 23 (DHGKTS) contributes to the GTP binding site. The segment at 43–47 (GISIR) is G2. 4 residues coordinate Zn(2+): C58, C61, C73, and C76. The G3 stretch occupies residues 90-93 (DAPG). GTP contacts are provided by residues 146–149 (NKID) and 181–183 (SAH). Positions 146–149 (NKID) are G4. The interval 181–183 (SAH) is G5.

It belongs to the TRAFAC class translation factor GTPase superfamily. Classic translation factor GTPase family. EIF2G subfamily. In terms of assembly, heterotrimer composed of an alpha, a beta and a gamma chain. Requires Mg(2+) as cofactor.

The enzyme catalyses GTP + H2O = GDP + phosphate + H(+). EIF-2 functions in the early steps of protein synthesis by forming a ternary complex with GTP and initiator tRNA. This chain is Translation initiation factor 2 subunit gamma, found in Methanococcus maripaludis (strain C7 / ATCC BAA-1331).